Reading from the N-terminus, the 284-residue chain is NAD kinase (284 aa).

D70 functions as the Proton acceptor in the catalytic mechanism. Residues 70–71 (DG), 139–140 (NE), K167, D169, L177, 180–185 (TAYNLS), and Q236 each bind NAD(+).

Belongs to the NAD kinase family. The cofactor is a divalent metal cation.

It localises to the cytoplasm. The catalysed reaction is NAD(+) + ATP = ADP + NADP(+) + H(+). Its function is as follows. Involved in the regulation of the intracellular balance of NAD and NADP, and is a key enzyme in the biosynthesis of NADP. Catalyzes specifically the phosphorylation on 2'-hydroxyl of the adenosine moiety of NAD to yield NADP. The protein is NAD kinase of Helicobacter pylori (strain HPAG1).